The sequence spans 65 residues: Large ribosomal subunit protein bL35 (65 aa).

This sequence belongs to the bacterial ribosomal protein bL35 family.

In Prochlorococcus marinus (strain MIT 9301), this protein is Large ribosomal subunit protein bL35.